An 895-amino-acid chain; its full sequence is uncharacterized protein (895 aa).

The interval 257 to 283 (KSHKYPPGPPDNSSSNTSGQQNTSNTS) is disordered. A compositionally biased stretch (low complexity) spans 268 to 283 (NSSSNTSGQQNTSNTS).

This is an uncharacterized protein from Acanthamoeba polyphaga mimivirus (APMV).